The chain runs to 196 residues: Large ribosomal subunit protein uL10 (196 aa).

Residues 163–196 (GAPAAAEAPAAEEAPAAEAAETEAPAEAAATEEN) are disordered. A compositionally biased stretch (low complexity) spans 164–196 (APAAAEAPAAEEAPAAEAAETEAPAEAAATEEN).

The protein belongs to the universal ribosomal protein uL10 family. Part of the ribosomal stalk of the 50S ribosomal subunit. The N-terminus interacts with L11 and the large rRNA to form the base of the stalk. The C-terminus forms an elongated spine to which L12 dimers bind in a sequential fashion forming a multimeric L10(L12)X complex.

In terms of biological role, forms part of the ribosomal stalk, playing a central role in the interaction of the ribosome with GTP-bound translation factors. This Arthrobacter sp. (strain FB24) protein is Large ribosomal subunit protein uL10.